The chain runs to 435 residues: uncharacterized protein (435 aa).

The next 12 helical transmembrane spans lie at 14–34 (VSMA…GVGA), 44–64 (TFIL…KLGA), 84–104 (IITG…IALF), 123–143 (FNIA…NFFG), 153–173 (FIVL…LITI), 187–207 (VSGM…FGVI), 224–244 (AIFI…ISAI), 267–287 (FLGN…ISSA), 324–344 (LYIT…EGVA), 346–366 (ITSA…YILI), 375–395 (IVIF…YYQW), and 400–420 (FVFY…IIYR).

The protein localises to the cell membrane. This is an uncharacterized protein from Methanocaldococcus jannaschii (strain ATCC 43067 / DSM 2661 / JAL-1 / JCM 10045 / NBRC 100440) (Methanococcus jannaschii).